A 366-amino-acid polypeptide reads, in one-letter code: Spore germination protein GerM (366 aa).

Disordered stretches follow at residues 42–72 (TFVN…KADQ) and 346–366 (EKGE…TGSF). A compositionally biased stretch (basic and acidic residues) spans 58–69 (KKTESEKSDTAK). The segment covering 357-366 (RPSQVNTGSF) has biased composition (polar residues).

Unknown. Affects both sporulation and germination. This chain is Spore germination protein GerM (gerM), found in Bacillus subtilis (strain 168).